The sequence spans 2188 residues: Glutamate synthase 2 [NADH], chloroplastic (2188 aa).

Residues 1–30 (MSAAQGLALKLRAAPAAGGVRGEKRRRAAS) constitute a chloroplast transit peptide. Disordered stretches follow at residues 14-40 (APAAGGVRGEKRRRAASATAAAAARPR) and 61-94 (VAPRASASRQAEAGAGAGAARPPPRSMSKIPESS). Residues 65 to 80 (ASASRQAEAGAGAGAA) show a composition bias toward low complexity. The Nucleophile role is filled by Cys107. The region spanning 107–511 (CGVGFIAELS…PGMMLLVDFE (405 aa)) is the Glutamine amidotransferase type-2 domain. Position 1198-1255 (1198-1255 (LAETHQTLVANGLRGRAVLQTDGQMKTGRDVAVACLLGAEEFGFSTAPLITLGCIMMR)) interacts with FMN. [3Fe-4S] cluster-binding residues include Cys1251, Cys1257, and Cys1262. 1974–1988 (GGGDTGTDCIGTSIR) contributes to the NAD(+) binding site.

It belongs to the glutamate synthase family. Monomer. It depends on [3Fe-4S] cluster as a cofactor. FAD is required as a cofactor. Requires FMN as cofactor. Expressed in leaf blades and sheaths.

The protein resides in the plastid. It is found in the chloroplast. It catalyses the reaction 2 L-glutamate + NAD(+) = L-glutamine + 2-oxoglutarate + NADH + H(+). It participates in amino-acid biosynthesis; L-glutamate biosynthesis via GLT pathway; L-glutamate from 2-oxoglutarate and L-glutamine (NAD(+) route): step 1/1. It functions in the pathway energy metabolism; nitrogen metabolism. Its function is as follows. Involved in glutamate biosynthesis. This is Glutamate synthase 2 [NADH], chloroplastic from Oryza sativa subsp. japonica (Rice).